A 103-amino-acid polypeptide reads, in one-letter code: Putative truncated guanine nucleotide exchange factor YLL017W (103 aa).

The region spanning 26-97 is the SH3 domain; the sequence is QPIDVVECTY…PPSFYTVHSK (72 aa).

In Saccharomyces cerevisiae (strain ATCC 204508 / S288c) (Baker's yeast), this protein is Putative truncated guanine nucleotide exchange factor YLL017W.